Reading from the N-terminus, the 609-residue chain is X-ray repair cross-complementing protein 6 (609 aa).

A disordered region spans residues M1–G28. S2 bears the N-acetylserine mark. The residue at position 2 (S2) is a Phosphoserine. Phosphoserine; by PRKDC is present on S6. Positions G12–L24 are enriched in acidic residues. The residue at position 27 (S27) is a Phosphoserine. K31 (schiff-base intermediate with DNA; for 5'-deoxyribose-5-phosphate lyase activity) is an active-site residue. K31 carries the N6-acetyllysine modification. Residue S51 is modified to Phosphoserine; by PRKDC. A Ku domain is found at L261–K468. Residues V277–D341 are DNA-binding. Residue K287 forms a Glycyl lysine isopeptide (Lys-Gly) (interchain with G-Cter in SUMO2) linkage. S306 bears the Phosphoserine mark. N6-acetyllysine is present on residues K317, K331, and K338. A Glycyl lysine isopeptide (Lys-Gly) (interchain with G-Cter in SUMO2) cross-link involves residue K317. Residues S373 to V482 form an interaction with XRCC5 region. Position 455 is a phosphothreonine (T455). K461 is subject to N6-acetyllysine. Residues S477 and S520 each carry the phosphoserine modification. Residues P536–E562 form a disordered region. K539, K542, and K544 each carry N6-acetyllysine. S550 is subject to Phosphoserine. The interval S550–D609 is interaction with DEAF1. N6-acetyllysine is present on residues K553 and K556. A Glycyl lysine isopeptide (Lys-Gly) (interchain with G-Cter in SUMO2) cross-link involves residue K556. A Phosphoserine modification is found at S560. K570 carries the N6,N6,N6-trimethyllysine modification. One can recognise an SAP domain in the interval L573–F607. The interval V578 to E583 is interaction with BAX.

It belongs to the ku70 family. As to quaternary structure, forms a heterodimer with XRCC5/Ku80; heterodimerization stabilizes XRCC5 protein. Component of the core long-range non-homologous end joining (NHEJ) complex (also named DNA-PK complex) composed of PRKDC, LIG4, XRCC4, XRCC6/Ku70, XRCC5/Ku86 and NHEJ1/XLF. Additional component of the NHEJ complex includes PAXX. Following autophosphorylation, PRKDC dissociates from DNA, leading to formation of the short-range NHEJ complex, composed of LIG4, XRCC4, XRCC6/Ku70, XRCC5/Ku86 and NHEJ1/XLF. The XRCC5-XRCC6 dimer also associates with NAA15, and this complex binds to the osteocalcin promoter and activates osteocalcin expression. In addition, XRCC6 interacts with the osteoblast-specific transcription factors MSX2, RUNX2 and DLX5. Interacts with ELF3. Interacts with ATP23. The XRCC5-XRRC6 dimer associates in a DNA-dependent manner with APEX1. Binds to CDK9 isoform 2. Identified in a complex with DEAF1 and XRCC5. Interacts with DEAF1 (via the SAND domain); the interaction is direct and may be inhibited by DNA-binding. Interacts with CLU. Interacts with NR4A3; the DNA-dependent protein kinase complex DNA-PK phosphorylates and activates NR4A3 and prevents NR4A3 ubiquitinylation and degradation. Interacts with CYREN isoform 1 (CYREN-1) and isoform 4 (CYREN-2) (via KBM motif). Interacts (via N-terminus) with HSF1 (via N-terminus); this interaction is direct and prevents XRCC5/XRCC6 heterodimeric binding and non-homologous end joining (NHEJ) repair activities induced by ionizing radiation (IR). Part of the HDP-RNP complex composed of at least HEXIM1, PRKDC, XRCC5, XRCC6, paraspeckle proteins (SFPQ, NONO, PSPC1, RBM14, and MATR3) and NEAT1 RNA. Interacts with HMBOX1. Interacts with ATF7. Interacts with APLF (via KBM motif). Interacts with WRN (via KBM motif). The XRCC5-XRCC6 dimer associates with ALKBH2. Interacts with TPRN; TPRN interacts with a number of DNA damage response proteins, is recruited to sites of DNA damage and may play a role in DNA damage repair. When not acetylated, interacts with BAX. Interacts with ERCC6L2. In terms of assembly, (Microbial infection) Interacts with human T-cell leukemia virus 1/HTLV-1 protein HBZ. Post-translationally, phosphorylation by PRKDC may enhance helicase activity. Phosphorylation of Ser-51 does not affect DNA repair. ADP-ribosylated by PARP3. In terms of processing, methylation by SETD4 leads to accumulation in the cytoplasm and is a prerequisite for acetylation, possibly due to the change of subcellular from the nucleus to the cytosol initiated by methylation, acetylation occurring in the cytosol. Post-translationally, acetylation can be catalyzed in vitro by CREBBP/CBP and KAT2B/PCAF.

Its subcellular location is the nucleus. The protein localises to the chromosome. It localises to the cytoplasm. In terms of biological role, single-stranded DNA-dependent ATP-dependent helicase that plays a key role in DNA non-homologous end joining (NHEJ) by recruiting DNA-PK to DNA. Required for double-strand break repair and V(D)J recombination. Also has a role in chromosome translocation. Has a role in chromosome translocation. The DNA helicase II complex binds preferentially to fork-like ends of double-stranded DNA in a cell cycle-dependent manner. It works in the 3'-5' direction. During NHEJ, the XRCC5-XRRC6 dimer performs the recognition step: it recognizes and binds to the broken ends of the DNA and protects them from further resection. Binding to DNA may be mediated by XRCC6. The XRCC5-XRRC6 dimer acts as a regulatory subunit of the DNA-dependent protein kinase complex DNA-PK by increasing the affinity of the catalytic subunit PRKDC to DNA by 100-fold. The XRCC5-XRRC6 dimer is probably involved in stabilizing broken DNA ends and bringing them together. The assembly of the DNA-PK complex to DNA ends is required for the NHEJ ligation step. Probably also acts as a 5'-deoxyribose-5-phosphate lyase (5'-dRP lyase), by catalyzing the beta-elimination of the 5' deoxyribose-5-phosphate at an abasic site near double-strand breaks. 5'-dRP lyase activity allows to 'clean' the termini of abasic sites, a class of nucleotide damage commonly associated with strand breaks, before such broken ends can be joined. The XRCC5-XRRC6 dimer together with APEX1 acts as a negative regulator of transcription. In association with NAA15, the XRCC5-XRRC6 dimer binds to the osteocalcin promoter and activates osteocalcin expression. Plays a role in the regulation of DNA virus-mediated innate immune response by assembling into the HDP-RNP complex, a complex that serves as a platform for IRF3 phosphorylation and subsequent innate immune response activation through the cGAS-STING pathway. Negatively regulates apoptosis by interacting with BAX and sequestering it from the mitochondria. Might have deubiquitination activity, acting on BAX. This chain is X-ray repair cross-complementing protein 6 (XRCC6), found in Homo sapiens (Human).